The following is a 238-amino-acid chain: Cysteine-rich venom protein (238 aa).

The signal sequence occupies residues 1–19 (MIAFIVLLSLAAVLQQSSG). Residues 20 to 27 (TVDFASES) constitute a propeptide that is removed on maturation. The SCP domain maps to 39–164 (KKHNALRRSV…PTKYLYVCQY (126 aa)). 8 disulfides stabilise this stretch: Cys75-Cys153, Cys92-Cys165, Cys148-Cys162, Cys184-Cys191, Cys187-Cys196, Cys200-Cys233, Cys209-Cys227, and Cys218-Cys231. In terms of domain architecture, ShKT spans 200-233 (CKREDDYSNCKSLAEKNKCMEEWMKSKCPASCFC).

The protein belongs to the CRISP family. Expressed by the venom gland.

The protein resides in the secreted. In terms of biological role, blocks olfactory (CNGA2) and retinal (CNGA1) cyclic nucleotide-gated (CNG) ion channel currents. Does not inhibit retinal (CNGA3) currents. It forms high-affinity contacts with the pore turret region and most likely inhibits CNG channel current by blocking the external entrance to the transmembrane pore. Does not affect neither depolarization- nor caffeine-induced contraction arterial smooth muscle. The chain is Cysteine-rich venom protein from Demansia vestigiata (Lesser black whip snake).